A 457-amino-acid chain; its full sequence is Argininosuccinate lyase (457 aa).

The protein belongs to the lyase 1 family. Argininosuccinate lyase subfamily.

It localises to the cytoplasm. It catalyses the reaction 2-(N(omega)-L-arginino)succinate = fumarate + L-arginine. It functions in the pathway amino-acid biosynthesis; L-arginine biosynthesis; L-arginine from L-ornithine and carbamoyl phosphate: step 3/3. In Shigella boydii serotype 18 (strain CDC 3083-94 / BS512), this protein is Argininosuccinate lyase.